The primary structure comprises 311 residues: 4-diphosphocytidyl-2-C-methyl-D-erythritol kinase (311 aa).

Lys16 is an active-site residue. 100–110 (PIGAGLAGGSS) is a binding site for ATP. The active site involves Asp142.

This sequence belongs to the GHMP kinase family. IspE subfamily.

It catalyses the reaction 4-CDP-2-C-methyl-D-erythritol + ATP = 4-CDP-2-C-methyl-D-erythritol 2-phosphate + ADP + H(+). It participates in isoprenoid biosynthesis; isopentenyl diphosphate biosynthesis via DXP pathway; isopentenyl diphosphate from 1-deoxy-D-xylulose 5-phosphate: step 3/6. Functionally, catalyzes the phosphorylation of the position 2 hydroxy group of 4-diphosphocytidyl-2C-methyl-D-erythritol. This is 4-diphosphocytidyl-2-C-methyl-D-erythritol kinase from Prochlorococcus marinus (strain MIT 9301).